Consider the following 225-residue polypeptide: Uracil-DNA glycosylase (225 aa).

D65 functions as the Proton acceptor in the catalytic mechanism.

Belongs to the uracil-DNA glycosylase (UDG) superfamily. UNG family.

It localises to the cytoplasm. It carries out the reaction Hydrolyzes single-stranded DNA or mismatched double-stranded DNA and polynucleotides, releasing free uracil.. Functionally, excises uracil residues from the DNA which can arise as a result of misincorporation of dUMP residues by DNA polymerase or due to deamination of cytosine. The protein is Uracil-DNA glycosylase of Lysinibacillus sphaericus (strain C3-41).